Reading from the N-terminus, the 715-residue chain is Protein DOA1 (715 aa).

WD repeat units lie at residues Gly11–Ser40, Gly53–Pro82, Gly97–Lys125, Ala135–Gln166, Ile177–Asp206, Gly218–Ser247, and Leu259–Ser288. Residue Ser332 is modified to Phosphoserine. Positions Ala352–Asp449 constitute a PFU domain. The tract at residues Phe434 to Asn440 is interaction with HSE1. The region spanning Lys465–Ser715 is the PUL domain. ARM repeat units follow at residues Tyr478–Ile512, Asp513–Ile543, Val544–Asn582, Glu583–Lys635, Gly636–Val680, and Glu681–Ser715.

Belongs to the WD repeat PLAP family. Forms a complex composed of CDC48, NPL4, UFD1, DOA1, SHP1 and deubiquitinase OTU1; within the complex interacts with CDC48. Interacts (via PUL domain) with CDC48 (via C-terminus); the interaction is direct. Forms a complex composed of CDC48, DOA1, deubiquitinase UBP3 and probably BRE5; within the complex interacts with CDC48 and UBP3. May form a complex composed of VPS27, HSE1 and DOA1. Interacts with HSE1 (via SH3 domain). Interacts (via WD repeats and PFU domain) with ubiquitin; the interaction is direct. Interacts with ubiquitinated FZO1 but not unmodified FZO1; the interaction recruits FZO1 to CDC48 and promotes FZO1 proteasomal degradation.

The protein resides in the nucleus. It is found in the cytoplasm. It localises to the mitochondrion outer membrane. The protein localises to the endosome membrane. Ubiquitin-binding protein involved in protein ubiquitination, sorting and degradation. Acts as a ubiquitinated substrate-recruiting adapter for chaperone ATPase CDC48 by binding mono- or polyubiquitin chains. Depending on the context, promotes or prevents proteasomal degradation of ubiquitinated proteins. Involved in the ubiquitin fusion degradation (UFD) pathway by promoting the degradation of ubiquitinated proteins. Involved in the mitochondria-associated degradation pathway (MAD) by promoting the degradation of several ubiquitinated membrane proteins. By competing with UFD2 to bind CDC48, prevents the multi-ubiquitination and subsequent degradation of UFD2-dependent substrates. Required for ribophagy, a process which relocalizes ribosomal particles into the vacuole for degradation in response to starvation. Involved in the ubiquitin-mediated sorting of membrane proteins into multivesicular bodies (MVBs). In addition, plays an essential role in maintaining cellular ubiquitin levels. May affect indirectly the degradation of ubiquitinylated proteins by regulating cellular ubiquitin levels. The polypeptide is Protein DOA1 (Saccharomyces cerevisiae (strain ATCC 204508 / S288c) (Baker's yeast)).